We begin with the raw amino-acid sequence, 128 residues long: MAASVLGSLLRTFRQAVPPSASGQVRGYYVDWRMLRDLKRRKMAYEYADERLRINSLRKNTILPKDLQEMAGDEIAALPRDSCPVRIRNRCVMTSRPRGVKRRWRLSRIVFRHLADHGLLSGVQRAIW.

The protein belongs to the universal ribosomal protein uS14 family. Component of the mitochondrial ribosome small subunit (28S) which comprises a 12S rRNA and about 30 distinct proteins. Interacts with LIAT1.

The protein localises to the mitochondrion. The sequence is that of Small ribosomal subunit protein uS14m (Mrps14) from Mus musculus (Mouse).